Consider the following 77-residue polypeptide: uncharacterized protein (77 aa).

The 77-residue stretch at 1–77 (MAFERQGKIE…VAILDGKLVW (77 aa)) folds into the Peptidase A1 domain.

This is an uncharacterized protein from Saccharomyces cerevisiae (strain ATCC 204508 / S288c) (Baker's yeast).